The sequence spans 415 residues: Lipoyl synthase, mitochondrial (415 aa).

The N-terminal 32 residues, 1 to 32 (MAVSTSHFRSLCASSRSLSRTGIVAPISCRGY), are a transit peptide targeting the mitochondrion. Residues 30–50 (RGYATTEPSPSATSTTTTTTA) form a disordered region. Positions 33–49 (ATTEPSPSATSTTTTTT) are enriched in low complexity. The [4Fe-4S] cluster site is built by C132, C137, C143, C163, C167, C170, and S378. The region spanning 146–367 (GSDKSAATAT…RQRALDMGFL (222 aa)) is the Radical SAM core domain.

This sequence belongs to the radical SAM superfamily. Lipoyl synthase family. It depends on [4Fe-4S] cluster as a cofactor.

It is found in the mitochondrion. It carries out the reaction [[Fe-S] cluster scaffold protein carrying a second [4Fe-4S](2+) cluster] + N(6)-octanoyl-L-lysyl-[protein] + 2 oxidized [2Fe-2S]-[ferredoxin] + 2 S-adenosyl-L-methionine + 4 H(+) = [[Fe-S] cluster scaffold protein] + N(6)-[(R)-dihydrolipoyl]-L-lysyl-[protein] + 4 Fe(3+) + 2 hydrogen sulfide + 2 5'-deoxyadenosine + 2 L-methionine + 2 reduced [2Fe-2S]-[ferredoxin]. It functions in the pathway protein modification; protein lipoylation via endogenous pathway; protein N(6)-(lipoyl)lysine from octanoyl-[acyl-carrier-protein]: step 2/2. Catalyzes the radical-mediated insertion of two sulfur atoms into the C-6 and C-8 positions of the octanoyl moiety bound to the lipoyl domains of lipoate-dependent enzymes, thereby converting the octanoylated domains into lipoylated derivatives. This is Lipoyl synthase, mitochondrial from Neosartorya fischeri (strain ATCC 1020 / DSM 3700 / CBS 544.65 / FGSC A1164 / JCM 1740 / NRRL 181 / WB 181) (Aspergillus fischerianus).